Reading from the N-terminus, the 545-residue chain is CTP synthase (545 aa).

The tract at residues 1–266 (MTTRYIFVTG…DELVIKRFNI (266 aa)) is amidoligase domain. Ser-14 contributes to the CTP binding site. Ser-14 is a binding site for UTP. Residues 15 to 20 (SLGKGI) and Asp-72 each bind ATP. Mg(2+) contacts are provided by Asp-72 and Glu-140. Residues 147-149 (DIE), 187-192 (KTKPTQ), and Lys-223 each bind CTP. UTP is bound by residues 187–192 (KTKPTQ) and Lys-223. ATP is bound at residue 239–241 (KDV). The Glutamine amidotransferase type-1 domain maps to 291 to 542 (TIGMVGKYIE…IAASLSHQKR (252 aa)). Residue Gly-352 participates in L-glutamine binding. Cys-379 functions as the Nucleophile; for glutamine hydrolysis in the catalytic mechanism. Residues 380 to 383 (LGMQ), Glu-403, and Arg-470 contribute to the L-glutamine site. Residues His-515 and Glu-517 contribute to the active site.

It belongs to the CTP synthase family. In terms of assembly, homotetramer.

The enzyme catalyses UTP + L-glutamine + ATP + H2O = CTP + L-glutamate + ADP + phosphate + 2 H(+). The catalysed reaction is L-glutamine + H2O = L-glutamate + NH4(+). It carries out the reaction UTP + NH4(+) + ATP = CTP + ADP + phosphate + 2 H(+). It functions in the pathway pyrimidine metabolism; CTP biosynthesis via de novo pathway; CTP from UDP: step 2/2. With respect to regulation, allosterically activated by GTP, when glutamine is the substrate; GTP has no effect on the reaction when ammonia is the substrate. The allosteric effector GTP functions by stabilizing the protein conformation that binds the tetrahedral intermediate(s) formed during glutamine hydrolysis. Inhibited by the product CTP, via allosteric rather than competitive inhibition. In terms of biological role, catalyzes the ATP-dependent amination of UTP to CTP with either L-glutamine or ammonia as the source of nitrogen. Regulates intracellular CTP levels through interactions with the four ribonucleotide triphosphates. The polypeptide is CTP synthase (Shewanella denitrificans (strain OS217 / ATCC BAA-1090 / DSM 15013)).